A 150-amino-acid chain; its full sequence is Large ribosomal subunit protein bL9 (150 aa).

The protein belongs to the bacterial ribosomal protein bL9 family.

Functionally, binds to the 23S rRNA. This chain is Large ribosomal subunit protein bL9, found in Photobacterium profundum (strain SS9).